A 565-amino-acid polypeptide reads, in one-letter code: Periplasmic trehalase (565 aa).

Residues 1-30 form the signal peptide; sequence MKSPAPSRPQKMALIPACIFLCFAALSVQA. Residues Arg152, 159 to 160, Asn196, 205 to 207, 277 to 279, and Gly310 contribute to the substrate site; these read WD, RSQ, and RPE. Active-site proton donor/acceptor residues include Asp312 and Glu496. Glu511 lines the substrate pocket. The tract at residues 539–565 is disordered; sequence CDNVPATRPLSESTTQPLKQKEAEPTP.

Belongs to the glycosyl hydrolase 37 family. In terms of assembly, monomer.

It is found in the periplasm. It catalyses the reaction alpha,alpha-trehalose + H2O = alpha-D-glucose + beta-D-glucose. Its function is as follows. Provides the cells with the ability to utilize trehalose at high osmolarity by splitting it into glucose molecules that can subsequently be taken up by the phosphotransferase-mediated uptake system. The polypeptide is Periplasmic trehalase (Escherichia coli O45:K1 (strain S88 / ExPEC)).